We begin with the raw amino-acid sequence, 750 residues long: Photosystem I P700 chlorophyll a apoprotein A1 (750 aa).

8 helical membrane passes run 70–93, 156–179, 195–219, 291–309, 346–369, 385–411, 433–455, and 531–549; these read VFSAHFGQLSIIFLWLSGMYFHGA, LYCTAIGALIFAALMLFAGWFHYH, LNHHLAGLLGLGSLSWAGHQVHVSL, IAHHHLAIAILFLIAGHMY, WHAQLSLNLAMLGSLTIIVAHHMY, LSLFTHHMWIGGFLIVGAAAHAAIFMV, AIISHLNWVCIFLGFHSFGLYIH, and FLVHHIHAFTIHVTVLILL. [4Fe-4S] cluster contacts are provided by cysteine 573 and cysteine 582. Transmembrane regions (helical) follow at residues 589–610 and 664–686; these read HVFLGLFWMYNAISVVIFHFSW and LSAYGLFFLGAHFVWAFSLMFLF. Residue histidine 675 participates in chlorophyll a' binding. Chlorophyll a is bound by residues methionine 683 and tyrosine 691. Position 692 (tryptophan 692) interacts with phylloquinone. Residues 724–744 traverse the membrane as a helical segment; the sequence is AVGVTHYLLGGIATTWAFFLA.

It belongs to the PsaA/PsaB family. As to quaternary structure, the PsaA/B heterodimer binds the P700 chlorophyll special pair and subsequent electron acceptors. PSI consists of a core antenna complex that captures photons, and an electron transfer chain that converts photonic excitation into a charge separation. The eukaryotic PSI reaction center is composed of at least 11 subunits. Requires P700 is a chlorophyll a/chlorophyll a' dimer, A0 is one or more chlorophyll a, A1 is one or both phylloquinones and FX is a shared 4Fe-4S iron-sulfur center. as cofactor.

The protein resides in the plastid. The protein localises to the chloroplast thylakoid membrane. The catalysed reaction is reduced [plastocyanin] + hnu + oxidized [2Fe-2S]-[ferredoxin] = oxidized [plastocyanin] + reduced [2Fe-2S]-[ferredoxin]. Functionally, psaA and PsaB bind P700, the primary electron donor of photosystem I (PSI), as well as the electron acceptors A0, A1 and FX. PSI is a plastocyanin-ferredoxin oxidoreductase, converting photonic excitation into a charge separation, which transfers an electron from the donor P700 chlorophyll pair to the spectroscopically characterized acceptors A0, A1, FX, FA and FB in turn. Oxidized P700 is reduced on the lumenal side of the thylakoid membrane by plastocyanin. The polypeptide is Photosystem I P700 chlorophyll a apoprotein A1 (Citrus sinensis (Sweet orange)).